The primary structure comprises 165 residues: NADH-quinone oxidoreductase subunit I (165 aa).

2 4Fe-4S ferredoxin-type domains span residues 66–98 (HRLT…ITAT) and 109–138 (SKFT…MDTG). Cys-78, Cys-81, Cys-84, Cys-88, Cys-118, Cys-121, Cys-124, and Cys-128 together coordinate [4Fe-4S] cluster.

Belongs to the complex I 23 kDa subunit family. NDH-1 is composed of 14 different subunits. Subunits NuoA, H, J, K, L, M, N constitute the membrane sector of the complex. The cofactor is [4Fe-4S] cluster.

It localises to the cell inner membrane. The enzyme catalyses a quinone + NADH + 5 H(+)(in) = a quinol + NAD(+) + 4 H(+)(out). Its function is as follows. NDH-1 shuttles electrons from NADH, via FMN and iron-sulfur (Fe-S) centers, to quinones in the respiratory chain. The immediate electron acceptor for the enzyme in this species is believed to be ubiquinone. Couples the redox reaction to proton translocation (for every two electrons transferred, four hydrogen ions are translocated across the cytoplasmic membrane), and thus conserves the redox energy in a proton gradient. The chain is NADH-quinone oxidoreductase subunit I from Campylobacter fetus subsp. fetus (strain 82-40).